Consider the following 207-residue polypeptide: Adenine phosphoribosyltransferase (207 aa).

The interval 1-33 (MRPAKPPQSKERKRSKSLTSADHDNSPQRAETA) is disordered.

The protein belongs to the purine/pyrimidine phosphoribosyltransferase family. As to quaternary structure, homodimer.

The protein localises to the cytoplasm. The enzyme catalyses AMP + diphosphate = 5-phospho-alpha-D-ribose 1-diphosphate + adenine. It functions in the pathway purine metabolism; AMP biosynthesis via salvage pathway; AMP from adenine: step 1/1. Its function is as follows. Catalyzes a salvage reaction resulting in the formation of AMP, that is energically less costly than de novo synthesis. The polypeptide is Adenine phosphoribosyltransferase (Corynebacterium jeikeium (strain K411)).